A 315-amino-acid polypeptide reads, in one-letter code: Ribosomal RNA small subunit methyltransferase H (315 aa).

S-adenosyl-L-methionine contacts are provided by residues 37–39 (AGH), D57, Y84, D105, and Q112.

It belongs to the methyltransferase superfamily. RsmH family.

It localises to the cytoplasm. The catalysed reaction is cytidine(1402) in 16S rRNA + S-adenosyl-L-methionine = N(4)-methylcytidine(1402) in 16S rRNA + S-adenosyl-L-homocysteine + H(+). Specifically methylates the N4 position of cytidine in position 1402 (C1402) of 16S rRNA. The chain is Ribosomal RNA small subunit methyltransferase H from Lachnospira eligens (strain ATCC 27750 / DSM 3376 / VPI C15-48 / C15-B4) (Eubacterium eligens).